We begin with the raw amino-acid sequence, 306 residues long: Probable GTP 3',8-cyclase (306 aa).

Positions 5–232 constitute a Radical SAM core domain; it reads RFGRPVTNLR…RRRKYFLPVD (228 aa). Arg-14 serves as a coordination point for GTP. 2 residues coordinate [4Fe-4S] cluster: Cys-21 and Cys-25. Tyr-27 is a binding site for S-adenosyl-L-methionine. [4Fe-4S] cluster is bound at residue Cys-28. Lys-61 lines the GTP pocket. Gly-65 serves as a coordination point for S-adenosyl-L-methionine. GTP is bound at residue Thr-90. Residue Ser-114 participates in S-adenosyl-L-methionine binding. Lys-150 contacts GTP. An S-adenosyl-L-methionine-binding site is contributed by Met-189. Cys-250 and Cys-253 together coordinate [4Fe-4S] cluster. A GTP-binding site is contributed by 255–257; sequence RLR. Cys-267 is a [4Fe-4S] cluster binding site.

Belongs to the radical SAM superfamily. MoaA family. [4Fe-4S] cluster is required as a cofactor.

The enzyme catalyses GTP + AH2 + S-adenosyl-L-methionine = (8S)-3',8-cyclo-7,8-dihydroguanosine 5'-triphosphate + 5'-deoxyadenosine + L-methionine + A + H(+). It participates in cofactor biosynthesis; molybdopterin biosynthesis. Functionally, catalyzes the cyclization of GTP to (8S)-3',8-cyclo-7,8-dihydroguanosine 5'-triphosphate. The chain is Probable GTP 3',8-cyclase from Pyrococcus abyssi (strain GE5 / Orsay).